A 223-amino-acid chain; its full sequence is Deoxyribose-phosphate aldolase (223 aa).

Asp92 functions as the Proton donor/acceptor in the catalytic mechanism. Catalysis depends on Lys154, which acts as the Schiff-base intermediate with acetaldehyde. Catalysis depends on Lys182, which acts as the Proton donor/acceptor.

The protein belongs to the DeoC/FbaB aldolase family. DeoC type 1 subfamily.

It is found in the cytoplasm. The enzyme catalyses 2-deoxy-D-ribose 5-phosphate = D-glyceraldehyde 3-phosphate + acetaldehyde. The protein operates within carbohydrate degradation; 2-deoxy-D-ribose 1-phosphate degradation; D-glyceraldehyde 3-phosphate and acetaldehyde from 2-deoxy-alpha-D-ribose 1-phosphate: step 2/2. Its function is as follows. Catalyzes a reversible aldol reaction between acetaldehyde and D-glyceraldehyde 3-phosphate to generate 2-deoxy-D-ribose 5-phosphate. The polypeptide is Deoxyribose-phosphate aldolase (Haemophilus influenzae (strain 86-028NP)).